A 51-amino-acid chain; its full sequence is Large ribosomal subunit protein eL39 (51 aa).

It belongs to the eukaryotic ribosomal protein eL39 family.

This is Large ribosomal subunit protein eL39 (rpl39e) from Pyrococcus horikoshii (strain ATCC 700860 / DSM 12428 / JCM 9974 / NBRC 100139 / OT-3).